The following is a 62-amino-acid chain: Zinc metalloproteinase-disintegrin-like BaG (62 aa).

In terms of domain architecture, Peptidase M12B spans 24 to 54 (KTDLLNRSHDNAQLSPINLVVAVIMAHEMGH). Asn-29 is a glycosylation site (N-linked (GlcNAc...) asparagine). His-50 is a binding site for Zn(2+). The active site involves Glu-51. His-54 contacts Zn(2+).

This sequence belongs to the venom metalloproteinase (M12B) family. P-III subfamily. P-IIIc sub-subfamily. In terms of assembly, dimer. Requires Zn(2+) as cofactor. Post-translationally, the N-terminus is blocked. In terms of tissue distribution, expressed by the venom gland.

It is found in the secreted. With respect to regulation, inhibited by EDTA, and 1,10-phenanthroline. Its function is as follows. Snake venom Zinc metalloproteinase that inhibits ADP-induced platelet aggregation and inhibits the alpha-5/beta-1 (ITGA5/ITGB1) integrin, a fibronectin receptor. Has caseinolytic activity. Induces the detachment of cells that are bound to fibronectin. This is Zinc metalloproteinase-disintegrin-like BaG from Bothrops alternatus (Urutu).